The chain runs to 401 residues: tRNA(Met) cytidine acetate ligase (401 aa).

ATP-binding positions include 7–20, G102, N164, and R189; that span reads IVEY…HLYH.

It belongs to the TmcAL family.

Its subcellular location is the cytoplasm. It carries out the reaction cytidine(34) in elongator tRNA(Met) + acetate + ATP = N(4)-acetylcytidine(34) in elongator tRNA(Met) + AMP + diphosphate. In terms of biological role, catalyzes the formation of N(4)-acetylcytidine (ac(4)C) at the wobble position of elongator tRNA(Met), using acetate and ATP as substrates. First activates an acetate ion to form acetyladenylate (Ac-AMP) and then transfers the acetyl group to tRNA to form ac(4)C34. The polypeptide is tRNA(Met) cytidine acetate ligase (Thermoanaerobacter pseudethanolicus (strain ATCC 33223 / 39E) (Clostridium thermohydrosulfuricum)).